Here is a 2216-residue protein sequence, read N- to C-terminus: Protein Ycf2 (2216 aa).

1567 to 1574 (GSIGTGRS) provides a ligand contact to ATP.

It belongs to the Ycf2 family.

It is found in the plastid stroma. Its function is as follows. Probable ATPase of unknown function. Its presence in a non-photosynthetic plant (Epifagus virginiana) and experiments in tobacco indicate that it has an essential function which is probably not related to photosynthesis. The chain is Protein Ycf2 from Epifagus virginiana (Beechdrops).